We begin with the raw amino-acid sequence, 361 residues long: 3-dehydroquinate synthase (361 aa).

NAD(+) is bound by residues 60–65 (DAEAAK), 94–98 (GATTD), 118–119 (TT), Lys131, and Lys140. Residues Glu173, His242, and His258 each contribute to the Zn(2+) site.

Belongs to the sugar phosphate cyclases superfamily. Dehydroquinate synthase family. Co(2+) is required as a cofactor. Zn(2+) serves as cofactor. Requires NAD(+) as cofactor.

The protein resides in the cytoplasm. It catalyses the reaction 7-phospho-2-dehydro-3-deoxy-D-arabino-heptonate = 3-dehydroquinate + phosphate. It functions in the pathway metabolic intermediate biosynthesis; chorismate biosynthesis; chorismate from D-erythrose 4-phosphate and phosphoenolpyruvate: step 2/7. Its function is as follows. Catalyzes the conversion of 3-deoxy-D-arabino-heptulosonate 7-phosphate (DAHP) to dehydroquinate (DHQ). In Cutibacterium acnes (strain DSM 16379 / KPA171202) (Propionibacterium acnes), this protein is 3-dehydroquinate synthase.